Here is a 560-residue protein sequence, read N- to C-terminus: MITKHLSDIDIAQQAKLRPIQDIAAKLQLHDEELECYGFTKAKISLTIFDRLKEQKEGHVILVTSINPTPAGEGKSTVTVGLGQAFEKIGKKAIIAMREPSLGPTMGIKGGAAGGGYSQVLPMEEINLHFTGDFHAITSAHNALSAFIDNHIHHGNELDIDARRIVWKRVLDLNDRALRQVVVGLGGQVNGYPREDGFDITVASEMMAILCLAEDLTDLKKRLSSIVVAYNRDGEPVTVGALGYEGVLTLLLKDALKPNLVQTIEGTPALVHGGPFANIAHGCNSLIATKMAAKLADYVVTEAGFGADLGAEKFLNIKTRAGDFKPGAVVIVATVRALKMHGGMKKTELKEENTQAVLKGIHNLEKHIETVQAFGLPYIVAVNRFITDTKEEIQAIEDWCLAHDHPVKAVNVWEEGGEGGTALAEELTTLIEKKKNSFSYLYEEDDSIEEKLSKVAKVVYGADGVTLTSKARKQLAAIEENSWGHLPVCMAKTQYSLSDDPALIGRPKGFTITIRELKPSVGAGFIVALTGSILTMPGLPKKPAALEMDLLEDGSVTGLF.

69–76 (TPAGEGKS) is an ATP binding site.

It belongs to the formate--tetrahydrofolate ligase family.

It catalyses the reaction (6S)-5,6,7,8-tetrahydrofolate + formate + ATP = (6R)-10-formyltetrahydrofolate + ADP + phosphate. It functions in the pathway one-carbon metabolism; tetrahydrofolate interconversion. This Bacillus pumilus (strain SAFR-032) protein is Formate--tetrahydrofolate ligase.